A 281-amino-acid chain; its full sequence is Probable feruloyl esterase A (281 aa).

The N-terminal stretch at 1–21 is a signal peptide; that stretch reads MKNFVSMHAILLACSAGAGLA. 3 cysteine pairs are disulfide-bonded: C50-C279, C112-C115, and C248-C255. A substrate-binding site is contributed by D98. An N-linked (GlcNAc...) asparagine glycan is attached at N100. Y101 serves as a coordination point for substrate. S154 (nucleophile) is an active-site residue. N-linked (GlcNAc...) asparagine glycosylation occurs at N173. The Charge relay system role is filled by D215. H268 is a binding site for substrate. H268 acts as the Charge relay system in catalysis.

This sequence belongs to the AB hydrolase superfamily. FaeA family.

It is found in the secreted. It carries out the reaction feruloyl-polysaccharide + H2O = ferulate + polysaccharide.. Its function is as follows. Involved in degradation of plant cell walls. Hydrolyzes the feruloyl-arabinose ester bond in arabinoxylans, and the feruloyl-galactose ester bond in pectin. The sequence is that of Probable feruloyl esterase A (faeA) from Aspergillus flavus (strain ATCC 200026 / FGSC A1120 / IAM 13836 / NRRL 3357 / JCM 12722 / SRRC 167).